A 392-amino-acid polypeptide reads, in one-letter code: NADH-quinone oxidoreductase subunit D (392 aa).

This sequence belongs to the complex I 49 kDa subunit family. As to quaternary structure, NDH-1 is composed of 14 different subunits. Subunits NuoB, C, D, E, F, and G constitute the peripheral sector of the complex.

The protein resides in the cell inner membrane. The enzyme catalyses a quinone + NADH + 5 H(+)(in) = a quinol + NAD(+) + 4 H(+)(out). In terms of biological role, NDH-1 shuttles electrons from NADH, via FMN and iron-sulfur (Fe-S) centers, to quinones in the respiratory chain. The immediate electron acceptor for the enzyme in this species is believed to be ubiquinone. Couples the redox reaction to proton translocation (for every two electrons transferred, four hydrogen ions are translocated across the cytoplasmic membrane), and thus conserves the redox energy in a proton gradient. The protein is NADH-quinone oxidoreductase subunit D of Paramagnetospirillum magneticum (strain ATCC 700264 / AMB-1) (Magnetospirillum magneticum).